A 183-amino-acid polypeptide reads, in one-letter code: Holliday junction branch migration complex subunit RuvA (183 aa).

Residues 1–63 (MIVGLIGVVE…EDAHLLYGFL (63 aa)) are domain I. The interval 64-141 (EEGEKILFER…IQDETKPMHN (78 aa)) is domain II. Asn-141 is a region of interest (flexible linker). The domain III stretch occupies residues 141–183 (NEVFLALESLGFKSAEINKVLKTLKPSLSIEAAIKEALQQLRS).

It belongs to the RuvA family. As to quaternary structure, homotetramer. Forms an RuvA(8)-RuvB(12)-Holliday junction (HJ) complex. HJ DNA is sandwiched between 2 RuvA tetramers; dsDNA enters through RuvA and exits via RuvB. An RuvB hexamer assembles on each DNA strand where it exits the tetramer. Each RuvB hexamer is contacted by two RuvA subunits (via domain III) on 2 adjacent RuvB subunits; this complex drives branch migration. In the full resolvosome a probable DNA-RuvA(4)-RuvB(12)-RuvC(2) complex forms which resolves the HJ.

It localises to the cytoplasm. Its function is as follows. The RuvA-RuvB-RuvC complex processes Holliday junction (HJ) DNA during genetic recombination and DNA repair, while the RuvA-RuvB complex plays an important role in the rescue of blocked DNA replication forks via replication fork reversal (RFR). RuvA specifically binds to HJ cruciform DNA, conferring on it an open structure. The RuvB hexamer acts as an ATP-dependent pump, pulling dsDNA into and through the RuvAB complex. HJ branch migration allows RuvC to scan DNA until it finds its consensus sequence, where it cleaves and resolves the cruciform DNA. This is Holliday junction branch migration complex subunit RuvA from Helicobacter pylori (strain G27).